A 162-amino-acid polypeptide reads, in one-letter code: D-aminoacyl-tRNA deacylase (162 aa).

Positions 143–144 match the Gly-cisPro motif, important for rejection of L-amino acids motif; it reads GP.

Belongs to the DTD family. As to quaternary structure, homodimer.

The protein localises to the cytoplasm. The enzyme catalyses glycyl-tRNA(Ala) + H2O = tRNA(Ala) + glycine + H(+). The catalysed reaction is a D-aminoacyl-tRNA + H2O = a tRNA + a D-alpha-amino acid + H(+). Functionally, an aminoacyl-tRNA editing enzyme that deacylates mischarged D-aminoacyl-tRNAs. Also deacylates mischarged glycyl-tRNA(Ala), protecting cells against glycine mischarging by AlaRS. Acts via tRNA-based rather than protein-based catalysis; rejects L-amino acids rather than detecting D-amino acids in the active site. By recycling D-aminoacyl-tRNA to D-amino acids and free tRNA molecules, this enzyme counteracts the toxicity associated with the formation of D-aminoacyl-tRNA entities in vivo and helps enforce protein L-homochirality. This Nitratidesulfovibrio vulgaris (strain ATCC 29579 / DSM 644 / CCUG 34227 / NCIMB 8303 / VKM B-1760 / Hildenborough) (Desulfovibrio vulgaris) protein is D-aminoacyl-tRNA deacylase.